Consider the following 363-residue polypeptide: Chorismate synthase (363 aa).

An NADP(+)-binding site is contributed by Arg-48. FMN is bound by residues Arg-125–Ser-127, Asn-238–Ala-239, Gly-278, Lys-293–Ser-297, and Arg-319.

The protein belongs to the chorismate synthase family. As to quaternary structure, homotetramer. FMNH2 serves as cofactor.

The enzyme catalyses 5-O-(1-carboxyvinyl)-3-phosphoshikimate = chorismate + phosphate. It participates in metabolic intermediate biosynthesis; chorismate biosynthesis; chorismate from D-erythrose 4-phosphate and phosphoenolpyruvate: step 7/7. In terms of biological role, catalyzes the anti-1,4-elimination of the C-3 phosphate and the C-6 proR hydrogen from 5-enolpyruvylshikimate-3-phosphate (EPSP) to yield chorismate, which is the branch point compound that serves as the starting substrate for the three terminal pathways of aromatic amino acid biosynthesis. This reaction introduces a second double bond into the aromatic ring system. The sequence is that of Chorismate synthase from Acinetobacter baumannii (strain ACICU).